A 253-amino-acid chain; its full sequence is MTRYKATIAYDGTDFAGFQSQTNQRTVQKEIEKILTKLNSFEPVILQGSGRTDSGVHAFGQVIHFDLKGKVRDLERLRFGLDTQTPADIAVKKVELVPDDWHARYQKHEKTYEYYLENSITRSPFQRHSKAYFRYPLNFERMQEAMSKLVGEHDFTGFTASGSSVDDKVRTIYQAEIIRLDEENFKFIFRGNGFLYKQVRNMVGTVIKIGNDRMPVSQIDKILTSKNRDFAGPTAAPEGLYLKEVKYAENTDI.

The active-site Nucleophile is Asp53. Tyr112 is a substrate binding site.

It belongs to the tRNA pseudouridine synthase TruA family. As to quaternary structure, homodimer.

The catalysed reaction is uridine(38/39/40) in tRNA = pseudouridine(38/39/40) in tRNA. Formation of pseudouridine at positions 38, 39 and 40 in the anticodon stem and loop of transfer RNAs. The sequence is that of tRNA pseudouridine synthase A from Lactococcus lactis subsp. lactis (strain IL1403) (Streptococcus lactis).